A 275-amino-acid chain; its full sequence is Large ribosomal subunit protein uL2 (275 aa).

The disordered stretch occupies residues 214–275; that stretch reads RWRGNRPTVR…NKFILSHRNK (62 aa). The span at 255–275 shows a compositional bias: basic residues; that stretch reads KGKKTRSNKRTNKFILSHRNK.

It belongs to the universal ribosomal protein uL2 family. In terms of assembly, part of the 50S ribosomal subunit. Forms a bridge to the 30S subunit in the 70S ribosome.

Functionally, one of the primary rRNA binding proteins. Required for association of the 30S and 50S subunits to form the 70S ribosome, for tRNA binding and peptide bond formation. It has been suggested to have peptidyltransferase activity; this is somewhat controversial. Makes several contacts with the 16S rRNA in the 70S ribosome. The polypeptide is Large ribosomal subunit protein uL2 (Blochmanniella pennsylvanica (strain BPEN)).